The chain runs to 200 residues: NADH-quinone oxidoreductase subunit C (200 aa).

This sequence belongs to the complex I 30 kDa subunit family. NDH-1 is composed of 14 different subunits. Subunits NuoB, C, D, E, F, and G constitute the peripheral sector of the complex.

It is found in the cell inner membrane. It catalyses the reaction a quinone + NADH + 5 H(+)(in) = a quinol + NAD(+) + 4 H(+)(out). Its function is as follows. NDH-1 shuttles electrons from NADH, via FMN and iron-sulfur (Fe-S) centers, to quinones in the respiratory chain. The immediate electron acceptor for the enzyme in this species is believed to be ubiquinone. Couples the redox reaction to proton translocation (for every two electrons transferred, four hydrogen ions are translocated across the cytoplasmic membrane), and thus conserves the redox energy in a proton gradient. The protein is NADH-quinone oxidoreductase subunit C of Ruegeria pomeroyi (strain ATCC 700808 / DSM 15171 / DSS-3) (Silicibacter pomeroyi).